The sequence spans 446 residues: Tubulin beta-8 chain (446 aa).

8 residues coordinate GTP: Q11, E69, S138, G142, T143, G144, N204, and N226. E69 serves as a coordination point for Mg(2+). Residues 426–446 (QDATAEDDYDEDDDAAAADEA) form a disordered region. A compositionally biased stretch (acidic residues) spans 429–446 (TAEDDYDEDDDAAAADEA).

It belongs to the tubulin family. Dimer of alpha and beta chains. A typical microtubule is a hollow water-filled tube with an outer diameter of 25 nm and an inner diameter of 15 nM. Alpha-beta heterodimers associate head-to-tail to form protofilaments running lengthwise along the microtubule wall with the beta-tubulin subunit facing the microtubule plus end conferring a structural polarity. Microtubules usually have 13 protofilaments but different protofilament numbers can be found in some organisms and specialized cells. Mg(2+) is required as a cofactor. Expressed in anthers.

It is found in the cytoplasm. The protein localises to the cytoskeleton. Tubulin is the major constituent of microtubules, a cylinder consisting of laterally associated linear protofilaments composed of alpha- and beta-tubulin heterodimers. Microtubules grow by the addition of GTP-tubulin dimers to the microtubule end, where a stabilizing cap forms. Below the cap, tubulin dimers are in GDP-bound state, owing to GTPase activity of alpha-tubulin. In Oryza sativa subsp. japonica (Rice), this protein is Tubulin beta-8 chain (TUBB8).